The chain runs to 88 residues: Exodeoxyribonuclease 7 small subunit (88 aa).

It belongs to the XseB family. As to quaternary structure, heterooligomer composed of large and small subunits.

It is found in the cytoplasm. The enzyme catalyses Exonucleolytic cleavage in either 5'- to 3'- or 3'- to 5'-direction to yield nucleoside 5'-phosphates.. Bidirectionally degrades single-stranded DNA into large acid-insoluble oligonucleotides, which are then degraded further into small acid-soluble oligonucleotides. The polypeptide is Exodeoxyribonuclease 7 small subunit (Bordetella petrii (strain ATCC BAA-461 / DSM 12804 / CCUG 43448)).